A 738-amino-acid chain; its full sequence is Polyribonucleotide nucleotidyltransferase (738 aa).

Mg(2+) contacts are provided by D528 and D534. Residues 594 to 653 enclose the KH domain; sequence PRVVRVKIPVQKIGELIGPKGKVINSIQDETGAEISIEDDGTVYIGSSQADSSEKAVAMV. The 73-residue stretch at 665-737 folds into the S1 motif domain; sequence GSQFLGTVVK…DRGKLCLVAV (73 aa).

The protein belongs to the polyribonucleotide nucleotidyltransferase family. Mg(2+) serves as cofactor.

Its subcellular location is the cytoplasm. It catalyses the reaction RNA(n+1) + phosphate = RNA(n) + a ribonucleoside 5'-diphosphate. In terms of biological role, involved in mRNA degradation. Catalyzes the phosphorolysis of single-stranded polyribonucleotides processively in the 3'- to 5'-direction. This Tropheryma whipplei (strain Twist) (Whipple's bacillus) protein is Polyribonucleotide nucleotidyltransferase.